A 230-amino-acid chain; its full sequence is MMTAVKQSGVWAVLLWPYLLAVSIQLDCRDEQGNMSRCPFISQEKLLDRIIQHAELISRISEESCSLFEELFVPFPLRLQRNTVGYACITKALPIPSSKSEIQQISDKWLLQSVLTLVQSWIEPLVYLQTTLDRYDNAPDVLLNKTKWVSEKLVSLEQGVVVLIRKMLDEGTLTTTYNEQDLLQYDVLPDMLESVMRDYTLLSCFKKDAHKMEIFLKLLKCRQTDKFNCA.

An N-terminal signal peptide occupies residues 1-23 (MMTAVKQSGVWAVLLWPYLLAVS). Cystine bridges form between cysteine 28–cysteine 38, cysteine 88–cysteine 204, and cysteine 221–cysteine 229. N-linked (GlcNAc...) asparagine glycans are attached at residues asparagine 34 and asparagine 144.

It belongs to the somatotropin/prolactin family. In terms of tissue distribution, pituitary gland.

The protein resides in the secreted. The sequence is that of Somatolactin from Solea senegalensis (Senegalese sole).